Consider the following 452-residue polypeptide: Gastrin/cholecystokinin type B receptor (452 aa).

Residues 1–21 form a disordered region; the sequence is MELLKLNRSVQGPGPGSGSSL. At 1-57 the chain is on the extracellular side; the sequence is MELLKLNRSVQGPGPGSGSSLCRPGVSLLNSSSAGNLSCDPPRIRGTGTRELEMAIR. N-linked (GlcNAc...) asparagine glycosylation is found at N7, N30, and N36. The chain crosses the membrane as a helical span at residues 58 to 79; sequence ITLYAVIFLMSVGGNVLIIVVL. The Cytoplasmic segment spans residues 80-87; sequence GLSRRLRT. A helical membrane pass occupies residues 88-109; that stretch reads VTNAFLLSLAVSDLLLAVACMP. At 110–131 the chain is on the extracellular side; it reads FTLLPNLMGTFIFGTVICKAIS. Cysteines 127 and 205 form a disulfide. Residues 132–150 form a helical membrane-spanning segment; sequence YLMGVSVSVSTLNLVAIAL. At 151 to 170 the chain is on the cytoplasmic side; the sequence is ERYSAICRPLQARVWQTRSH. The chain crosses the membrane as a helical span at residues 171–189; it reads AARVILATWLLSGLLMVPY. Topologically, residues 190 to 219 are extracellular; it reads PVYTMVQPVGPRVLQCMHRWPSARVQQTWS. Residues 220–242 form a helical membrane-spanning segment; sequence VLLLLLLFFIPGVVIAVAYGLIS. Over 243–338 the chain is Cytoplasmic; the sequence is RELYLGLHFD…KLLAKKRVVR (96 aa). The tract at residues 257 to 286 is disordered; that stretch reads SETQSRARNQGGLPGGAAPGPVHQNGGCRP. Residues 339 to 360 form a helical membrane-spanning segment; it reads MLLVIVLLFFLCWLPVYSVNTW. The Extracellular segment spans residues 361-378; that stretch reads RAFDGPGAQRALSGAPIS. The chain crosses the membrane as a helical span at residues 379–399; that stretch reads FIHLLSYVSACVNPLVYCFMH. Residues 400–452 are Cytoplasmic-facing; the sequence is RRFRQACLDTCARCCPRPPRARPQPLPDEDPPTPSIASLSRLSYTTISTLGPG. Residue C413 is the site of S-palmitoyl cysteine attachment. Residues 421 to 452 form a disordered region; the sequence is RPQPLPDEDPPTPSIASLSRLSYTTISTLGPG. Polar residues predominate over residues 434 to 452; sequence SIASLSRLSYTTISTLGPG.

It belongs to the G-protein coupled receptor 1 family. In terms of tissue distribution, parietal cells, pancreas, brain and various neoplastic tissues.

It is found in the cell membrane. In terms of biological role, receptor for gastrin and cholecystokinin. The CCK-B receptors occur throughout the central nervous system where they modulate anxiety, analgesia, arousal, and neuroleptic activity. This receptor mediates its action by association with G proteins that activate a phosphatidylinositol-calcium second messenger system. The sequence is that of Gastrin/cholecystokinin type B receptor (Cckbr) from Rattus norvegicus (Rat).